The following is a 203-amino-acid chain: MIGRLRGIILEKQPPLVLLETAGVGYEVHMPMTCFYELPEAGQEAIVFTHFVVREDAQLLYGFNNKQERTLFKELIKTNGVGPKLALAILSGMSAQQFVNAVEREEVASLVKLPGIGKKTAERLIVEMKDRFKGLHGDLFTPAADLVLTSPAGPTADDAEQEAVAALVALGYKPQEASRMVSKIARPDANSETLIREALRAAL.

The segment at 1–64 is domain I; the sequence is MIGRLRGIIL…EDAQLLYGFN (64 aa). The domain II stretch occupies residues 65–142; sequence NKQERTLFKE…KGLHGDLFTP (78 aa). A flexible linker region spans residues 143–154; sequence AADLVLTSPAGP. A domain III region spans residues 155–203; it reads TADDAEQEAVAALVALGYKPQEASRMVSKIARPDANSETLIREALRAAL.

This sequence belongs to the RuvA family. Homotetramer. Forms an RuvA(8)-RuvB(12)-Holliday junction (HJ) complex. HJ DNA is sandwiched between 2 RuvA tetramers; dsDNA enters through RuvA and exits via RuvB. An RuvB hexamer assembles on each DNA strand where it exits the tetramer. Each RuvB hexamer is contacted by two RuvA subunits (via domain III) on 2 adjacent RuvB subunits; this complex drives branch migration. In the full resolvosome a probable DNA-RuvA(4)-RuvB(12)-RuvC(2) complex forms which resolves the HJ.

Its subcellular location is the cytoplasm. Functionally, the RuvA-RuvB-RuvC complex processes Holliday junction (HJ) DNA during genetic recombination and DNA repair, while the RuvA-RuvB complex plays an important role in the rescue of blocked DNA replication forks via replication fork reversal (RFR). RuvA specifically binds to HJ cruciform DNA, conferring on it an open structure. The RuvB hexamer acts as an ATP-dependent pump, pulling dsDNA into and through the RuvAB complex. HJ branch migration allows RuvC to scan DNA until it finds its consensus sequence, where it cleaves and resolves the cruciform DNA. The polypeptide is Holliday junction branch migration complex subunit RuvA (Klebsiella pneumoniae (strain 342)).